Here is an 82-residue protein sequence, read N- to C-terminus: RNA-binding protein GK0100 (82 aa).

This sequence belongs to the eukaryotic ribosomal protein eL8 family.

This chain is RNA-binding protein GK0100, found in Geobacillus kaustophilus (strain HTA426).